Here is a 442-residue protein sequence, read N- to C-terminus: Lipoyl synthase, apicoplast (442 aa).

The signal sequence occupies residues 1–25 (MHVLTPSLYIYAFFIVCVRLKCGRS). The segment at 92 to 154 (LLRSESATDE…EKKPDWFHVP (63 aa)) is disordered. The span at 109 to 127 (LKEKLKESPANWGKDKQEE) shows a compositional bias: basic and acidic residues. [4Fe-4S] cluster contacts are provided by C177, C182, C188, C203, C207, C210, and S418. The Radical SAM core domain occupies 189 to 407 (WNIGTATIML…KEEGMKMGFK (219 aa)).

This sequence belongs to the radical SAM superfamily. Lipoyl synthase family. [4Fe-4S] cluster serves as cofactor.

It localises to the plastid. The protein resides in the apicoplast. The enzyme catalyses [[Fe-S] cluster scaffold protein carrying a second [4Fe-4S](2+) cluster] + N(6)-octanoyl-L-lysyl-[protein] + 2 oxidized [2Fe-2S]-[ferredoxin] + 2 S-adenosyl-L-methionine + 4 H(+) = [[Fe-S] cluster scaffold protein] + N(6)-[(R)-dihydrolipoyl]-L-lysyl-[protein] + 4 Fe(3+) + 2 hydrogen sulfide + 2 5'-deoxyadenosine + 2 L-methionine + 2 reduced [2Fe-2S]-[ferredoxin]. It functions in the pathway protein modification; protein lipoylation via endogenous pathway; protein N(6)-(lipoyl)lysine from octanoyl-[acyl-carrier-protein]: step 2/2. In terms of biological role, catalyzes the radical-mediated insertion of two sulfur atoms into the C-6 and C-8 positions of the octanoyl moiety bound to the lipoyl domains of lipoate-dependent enzymes, thereby converting the octanoylated domains into lipoylated derivatives. The chain is Lipoyl synthase, apicoplast from Plasmodium vivax (strain Salvador I).